The sequence spans 480 residues: Cysteine--tRNA ligase (480 aa).

Cysteine 29 is a binding site for Zn(2+). Positions 31–41 (PTVYGHAHLGH) match the 'HIGH' region motif. Cysteine 221, histidine 246, and glutamate 250 together coordinate Zn(2+). Positions 278-282 (KMGKS) match the 'KMSKS' region motif. Lysine 281 is a binding site for ATP.

The protein belongs to the class-I aminoacyl-tRNA synthetase family. As to quaternary structure, monomer. Zn(2+) is required as a cofactor.

It is found in the cytoplasm. The enzyme catalyses tRNA(Cys) + L-cysteine + ATP = L-cysteinyl-tRNA(Cys) + AMP + diphosphate. The chain is Cysteine--tRNA ligase from Chlorobium chlorochromatii (strain CaD3).